Consider the following 340-residue polypeptide: Dihydroorotate dehydrogenase (quinone) (340 aa).

FMN is bound by residues 61 to 65 (AGLDK) and Thr85. Lys65 provides a ligand contact to substrate. 110–114 (NRMGF) contacts substrate. The FMN site is built by Asn138 and Asn171. Asn171 serves as a coordination point for substrate. The active-site Nucleophile is the Ser174. Residue Asn176 coordinates substrate. FMN-binding residues include Lys216 and Thr244. 245–246 (NT) contacts substrate. Residues Gly267, Gly296, and 317–318 (YS) each bind FMN.

It belongs to the dihydroorotate dehydrogenase family. Type 2 subfamily. In terms of assembly, monomer. It depends on FMN as a cofactor.

Its subcellular location is the cell membrane. The enzyme catalyses (S)-dihydroorotate + a quinone = orotate + a quinol. The protein operates within pyrimidine metabolism; UMP biosynthesis via de novo pathway; orotate from (S)-dihydroorotate (quinone route): step 1/1. In terms of biological role, catalyzes the conversion of dihydroorotate to orotate with quinone as electron acceptor. This Pseudomonas putida (strain ATCC 47054 / DSM 6125 / CFBP 8728 / NCIMB 11950 / KT2440) protein is Dihydroorotate dehydrogenase (quinone).